The chain runs to 623 residues: Membrane protein insertase YidC (623 aa).

Residues Leu-8–Pro-28 form a helical membrane-spanning segment. The tract at residues Thr-33–Asp-64 is disordered. The span at Thr-44 to Asp-62 shows a compositional bias: low complexity. 4 helical membrane-spanning segments follow: residues Met-379 to Tyr-399, Leu-449 to Ile-469, Thr-507 to Leu-527, and Ile-543 to Val-563. The segment covering Lys-601 to Pro-617 has biased composition (low complexity). The disordered stretch occupies residues Lys-601 to Pro-623.

Belongs to the OXA1/ALB3/YidC family. Type 1 subfamily. Interacts with the Sec translocase complex via SecD. Specifically interacts with transmembrane segments of nascent integral membrane proteins during membrane integration.

The protein localises to the cell inner membrane. In terms of biological role, required for the insertion and/or proper folding and/or complex formation of integral membrane proteins into the membrane. Involved in integration of membrane proteins that insert both dependently and independently of the Sec translocase complex, as well as at least some lipoproteins. Aids folding of multispanning membrane proteins. The protein is Membrane protein insertase YidC of Cereibacter sphaeroides (strain KD131 / KCTC 12085) (Rhodobacter sphaeroides).